The primary structure comprises 58 residues: Mesomartoxin (58 aa).

The N-terminal stretch at methionine 1 to glycine 29 is a signal peptide. Cystine bridges form between cysteine 31/cysteine 49, cysteine 35/cysteine 54, and cysteine 39/cysteine 56.

Belongs to the short scorpion toxin superfamily. Potassium channel inhibitor family. Alpha-KTx 26 subfamily. Expressed by the venom gland.

The protein resides in the secreted. Recombinant toxin that reversibly blocks the voltage-gated potassium channels Shaker (IC(50)=0.054 nM), rKv1.2/KCNA2 (IC(50)=15.6 nM), and rKv1.3/KCNA3 (IC(50)=12.5 uM). The chain is Mesomartoxin from Olivierus martensii (Manchurian scorpion).